We begin with the raw amino-acid sequence, 274 residues long: Large ribosomal subunit protein uL2cz/uL2cy (274 aa).

Disordered regions lie at residues 1 to 25 and 224 to 274; these read MAIHLYKTSTPSTRNGAVDSQVKSN and NPVD…RRSK.

The protein belongs to the universal ribosomal protein uL2 family. In terms of assembly, part of the 50S ribosomal subunit.

It localises to the plastid. The protein resides in the chloroplast. The sequence is that of Large ribosomal subunit protein uL2cz/uL2cy (rpl2-A) from Cucumis sativus (Cucumber).